A 221-amino-acid chain; its full sequence is Phosphate-specific transport system accessory protein PhoU homolog 1 (221 aa).

This sequence belongs to the PhoU family. Homodimer.

It is found in the cytoplasm. Its function is as follows. Plays a role in the regulation of phosphate uptake. In this role, it may bind, possibly as a chaperone, to PhoR, PhoP or a PhoR-PhoP complex to promote dephosphorylation of phospho-PhoP, or inhibit formation of the PhoR-PhoP transitory complex. This is Phosphate-specific transport system accessory protein PhoU homolog 1 (phoU1) from Mycobacterium bovis (strain ATCC BAA-935 / AF2122/97).